An 886-amino-acid chain; its full sequence is Linoleate 9S-lipoxygenase 5 (886 aa).

The PLAT domain occupies 35-180; it reads IEGEVVVMKK…RYRSDRVFFS (146 aa). In terms of domain architecture, Lipoxygenase spans 183–886; it reads AYLPSETPEL…GKGIPNSVSI (704 aa). The interval 234–266 is disordered; it reads GPDSVRPVLGGSPELPYPRRGKTGRKSTKSDPK. Histidine 542, histidine 547, histidine 733, asparagine 737, and isoleucine 886 together coordinate Fe cation.

It belongs to the lipoxygenase family. Requires Fe cation as cofactor. In terms of tissue distribution, expressed in roots.

The catalysed reaction is (9Z,12Z)-octadecadienoate + O2 = (9S)-hydroperoxy-(10E,12Z)-octadecadienoate. The enzyme catalyses (9Z,12Z,15Z)-octadecatrienoate + O2 = (9S)-hydroperoxy-(10E,12Z,15Z)-octadecatrienoate. The protein operates within lipid metabolism; oxylipin biosynthesis. 9S-lipoxygenase that can use linoleic acid or linolenic acid as substrates. Plant lipoxygenases may be involved in a number of diverse aspects of plant physiology including growth and development, pest resistance, and senescence or responses to wounding. Catalyzes the hydroperoxidation of lipids containing a cis,cis-1,4-pentadiene structure. Function as regulators of root development by controlling the emergence of lateral roots. 9S-lypoxygenase-derived oxylipins may play an antagonistic role to ethylene signaling in the control of responses involving oxidative stress, lipid peroxidation and plant defense. LOX5-derived oxylipins may facilitate performance of green peach aphid (Myzus persicae) on foliage. 9S-lypoxygenase-derived oxylipins are engaged during infection to control the balance between salicylic acid (SA) and jasmonate (JA) signaling to facilitate infection by the fungal pathogen Fusarium graminearum. 9S-lypoxygenase-derived oxylipins activate brassinosteroid signaling to promote cell wall-based defense and limit pathogen infection. Does not seem to contribute to the oxidation of free fatty acids during seed aging. This chain is Linoleate 9S-lipoxygenase 5, found in Arabidopsis thaliana (Mouse-ear cress).